The sequence spans 572 residues: Potassium-transporting ATPase potassium-binding subunit (572 aa).

Transmembrane regions (helical) follow at residues 6–26 (ILFV…GTYI), 66–86 (FFSL…VLLL), 135–155 (ALAV…IVLI), 177–197 (IFWI…FQGV), 251–271 (TIIT…ALTY), 283–303 (GWMI…VMTI), 382–402 (IFGG…LAVF), 428–448 (MFAL…AAVI), 493–513 (ITIA…VMML), and 537–557 (FIFS…TIFP).

The protein belongs to the KdpA family. In terms of assembly, the system is composed of three essential subunits: KdpA, KdpB and KdpC.

The protein resides in the cell inner membrane. In terms of biological role, part of the high-affinity ATP-driven potassium transport (or Kdp) system, which catalyzes the hydrolysis of ATP coupled with the electrogenic transport of potassium into the cytoplasm. This subunit binds the periplasmic potassium ions and delivers the ions to the membrane domain of KdpB through an intramembrane tunnel. This Francisella philomiragia subsp. philomiragia (strain ATCC 25017 / CCUG 19701 / FSC 153 / O#319-036) protein is Potassium-transporting ATPase potassium-binding subunit.